The following is a 340-amino-acid chain: Functional amyloid subunit FapC (340 aa).

An N-terminal signal peptide occupies residues 1-24 (MKATMVLTPLALAMAAVLSVSAYA). One copy of the FapC_R1 repeat lies at 67 to 100 (NNASVSGSIKDASGNVGVNVAAGDNNQQANAAAL). A linker 1 region spans residues 101–133 (ASADASFVFGTATASTSVLQSGYGNTLNNYSNP). Residues 134-167 (NTASLSNSANNVSGNLGVNVAAGNFNQQKNDLAA) form a FapC_R2 repeat. The interval 168-290 (AVSNGQYSTA…AIVGFKTPVT (123 aa)) is linker 2. A FapC_R3 repeat occupies 291–324 (NNASLSNSLQNVSGNVGVNIAAGGGNQQSNSLSI). The Cys-X-X-Cys signature appears at 328 to 331 (CSSC).

It belongs to the FapB/FapC family. As to quaternary structure, the major component of purified amyloid fibrils. Fibrils are resistant to boiling in 2% (weight/vol) SDS and require &gt;90% (vol/vol) formic acid to dissolve. Interacts with FapA in vitro.

Its subcellular location is the fimbrium. It localises to the secreted. Functionally, the major functional amyloid subunit in this bacterium. Upon overexpression of the endogenous six-gene locus (fapA-fapF), cells form large clumps during liquid growth, make large amounts of biofilm and produce amyloid fibrils. The chain is Functional amyloid subunit FapC from Pseudomonas aeruginosa (strain ATCC 15692 / DSM 22644 / CIP 104116 / JCM 14847 / LMG 12228 / 1C / PRS 101 / PAO1).